We begin with the raw amino-acid sequence, 542 residues long: Hydroxylamine reductase (542 aa).

Residues cysteine 5, cysteine 8, cysteine 17, and cysteine 23 each contribute to the [4Fe-4S] cluster site. Positions 237, 261, 305, 397, 425, 450, 485, and 487 each coordinate hybrid [4Fe-2O-2S] cluster. Cysteine persulfide is present on cysteine 397.

It belongs to the HCP family. [4Fe-4S] cluster is required as a cofactor. Requires hybrid [4Fe-2O-2S] cluster as cofactor.

It is found in the cytoplasm. The catalysed reaction is A + NH4(+) + H2O = hydroxylamine + AH2 + H(+). In terms of biological role, catalyzes the reduction of hydroxylamine to form NH(3) and H(2)O. The chain is Hydroxylamine reductase from Acetivibrio thermocellus (strain ATCC 27405 / DSM 1237 / JCM 9322 / NBRC 103400 / NCIMB 10682 / NRRL B-4536 / VPI 7372) (Clostridium thermocellum).